Reading from the N-terminus, the 239-residue chain is Protein LIFEGUARD 2 (239 aa).

The next 7 membrane-spanning stretches (helical) occupy residues 41 to 61 (LLVT…SVFF), 66 to 86 (AGFA…CPLY), 96 to 116 (YLLL…TCAF), 121 to 141 (VILE…LYTF), 156 to 176 (FLFG…LFPL), 179 to 199 (ISVM…IVYD), and 213 to 233 (IWAA…LLTL).

Belongs to the BI1 family. Expressed in seedlings, roots, leaves, inflorescences and flowers.

It is found in the membrane. Regulates the brassinosteroid (BR) signaling pathway that mediates cell elongation and organ morphogenesis. Its function is as follows. (Microbial infection) Facilitates the development of the powdery mildew fungus E.cruciferarum. In terms of biological role, (Microbial infection) May prevent cell death upon A.alternata f.sp. lycopersici (AAL) toxin treatment. This is Protein LIFEGUARD 2 from Arabidopsis thaliana (Mouse-ear cress).